The sequence spans 225 residues: Shikimate kinase (225 aa).

27–32 (GAGKTT) contributes to the ATP binding site. Threonine 31 is a binding site for Mg(2+). Substrate is bound by residues aspartate 49, arginine 73, and glycine 95. Arginine 132 contributes to the ATP binding site. Arginine 150 contributes to the substrate binding site. Residues 186 to 225 (GGSEPDEAADAAGGSEPDEAADAAGGSEPDEAADAAGGKR) are disordered.

This sequence belongs to the shikimate kinase family. Monomer. Requires Mg(2+) as cofactor.

The protein resides in the cytoplasm. The enzyme catalyses shikimate + ATP = 3-phosphoshikimate + ADP + H(+). The protein operates within metabolic intermediate biosynthesis; chorismate biosynthesis; chorismate from D-erythrose 4-phosphate and phosphoenolpyruvate: step 5/7. Its function is as follows. Catalyzes the specific phosphorylation of the 3-hydroxyl group of shikimic acid using ATP as a cosubstrate. This is Shikimate kinase from Frankia casuarinae (strain DSM 45818 / CECT 9043 / HFP020203 / CcI3).